Here is a 199-residue protein sequence, read N- to C-terminus: Probable cobalt-precorrin-6B C(15)-methyltransferase (decarboxylating) (199 aa).

S-adenosyl-L-methionine is bound by residues Thr24, 48 to 52 (GCGTG), Asp72, and Ala101.

The protein belongs to the methyltransferase superfamily. Archaeal-type CbiT family.

The enzyme catalyses Co-precorrin-6B + S-adenosyl-L-methionine = Co-precorrin-7 + S-adenosyl-L-homocysteine + CO2. The protein operates within cofactor biosynthesis; adenosylcobalamin biosynthesis; cob(II)yrinate a,c-diamide from sirohydrochlorin (anaerobic route): step 8/10. In terms of biological role, catalyzes the methylation of C-15 in cobalt-precorrin-6B followed by the decarboxylation of C-12 to form cobalt-precorrin-7. The sequence is that of Probable cobalt-precorrin-6B C(15)-methyltransferase (decarboxylating) from Saccharolobus solfataricus (strain ATCC 35092 / DSM 1617 / JCM 11322 / P2) (Sulfolobus solfataricus).